The primary structure comprises 149 residues: 3-hydroxyacyl-[acyl-carrier-protein] dehydratase FabZ (149 aa).

Histidine 47 is an active-site residue.

The protein belongs to the thioester dehydratase family. FabZ subfamily.

It localises to the cytoplasm. The catalysed reaction is a (3R)-hydroxyacyl-[ACP] = a (2E)-enoyl-[ACP] + H2O. Functionally, involved in unsaturated fatty acids biosynthesis. Catalyzes the dehydration of short chain beta-hydroxyacyl-ACPs and long chain saturated and unsaturated beta-hydroxyacyl-ACPs. The protein is 3-hydroxyacyl-[acyl-carrier-protein] dehydratase FabZ of Thioalkalivibrio sulfidiphilus (strain HL-EbGR7).